A 644-amino-acid polypeptide reads, in one-letter code: Keratin, type II cytoskeletal 1 (644 aa).

Residues 2-179 form a head region; sequence SRQFSSRSGY…DPEIQKVKSR (178 aa). At R12 the chain carries Omega-N-methylarginine. Phosphoserine is present on residues S18 and S21. Residues 22-38 show a composition bias toward low complexity; the sequence is AGIINYQRRTTSSSTRR. Residues 22-47 form a disordered region; it reads AGIINYQRRTTSSSTRRSGGGGGRFS. The residue at position 45 (R45) is an Omega-N-methylarginine. S66 carries the post-translational modification Phosphoserine. R82 bears the Omega-N-methylarginine mark. The interval 180–215 is coil 1A; that stretch reads EREQIKSLNNQFASFIDKVRFLEQQNQVLQTKWELL. Residues 180–493 enclose the IF rod domain; sequence EREQIKSLNN…TLLEGEESRM (314 aa). Residues 216–234 are linker 1; the sequence is QQVDTSTRTHNLEPYFESF. Residues 235–326 are coil 1B; the sequence is INNLRRRVDQ…ALYQAELSQM (92 aa). At K276 the chain carries N6,N6-dimethyllysine. A linker 12 region spans residues 327–350; it reads QTQISETNVILSMDNNRSLDLDSI. The residue at position 344 (S344) is a Phosphoserine. Positions 351–489 are coil 2; that stretch reads IAEVKAQYED…ATYRTLLEGE (139 aa). Disordered stretches follow at residues 489–523 and 568–644; these read EESRMSGECAPNVSVSVSTSHTTISGGGSRGGGGG and SGGG…GVTR. Positions 490 to 644 are tail; sequence ESRMSGECAP…VSTTYSGVTR (155 aa). Residues 501–511 are compositionally biased toward low complexity; sequence VSVSVSTSHTT. 2 stretches are compositionally biased toward gly residues: residues 513 to 523 and 568 to 620; these read SGGGSRGGGGG and SGGG…GSSS. R518 and R588 each carry omega-N-methylarginine. A compositionally biased stretch (low complexity) spans 621–631; the sequence is GGVKSSGGSSS. Residues 632–644 are compositionally biased toward polar residues; the sequence is VKFVSTTYSGVTR.

Belongs to the intermediate filament family. Heterotetramer of two type I and two type II keratins. Heterodimer with KRT10. Two heterodimers of KRT1 and KRT10 form a heterotetramer. Forms a heterodimer with KRT14; the interaction is more abundant in the absence of KRT5. Interacts with PLEC isoform 1C, when in a heterodimer with KRT10. Interacts with ITGB1 in the presence of RACK1 and SRC, and with RACK1. Interacts with C1QBP; the association represents a cell surface kininogen receptor. Interacts with EPPK1; interaction is dependent of higher-order structure of intermediate filament. Post-translationally, undergoes deimination of some arginine residues (citrullination). In terms of tissue distribution, the source of this protein is neonatal foreskin. The 67-kDa type II keratins are expressed in terminally differentiating epidermis.

It localises to the cell membrane. The protein resides in the cytoplasm. May regulate the activity of kinases such as PKC and SRC via binding to integrin beta-1 (ITB1) and the receptor of activated protein C kinase 1 (RACK1). In complex with C1QBP is a high affinity receptor for kininogen-1/HMWK. In Homo sapiens (Human), this protein is Keratin, type II cytoskeletal 1 (KRT1).